Reading from the N-terminus, the 101-residue chain is Small ribosomal subunit protein uS14 (101 aa).

The protein belongs to the universal ribosomal protein uS14 family. As to quaternary structure, part of the 30S ribosomal subunit. Contacts proteins S3 and S10.

In terms of biological role, binds 16S rRNA, required for the assembly of 30S particles and may also be responsible for determining the conformation of the 16S rRNA at the A site. The protein is Small ribosomal subunit protein uS14 of Vibrio campbellii (strain ATCC BAA-1116).